The following is a 911-amino-acid chain: Protein translocase subunit SecA (911 aa).

ATP-binding positions include glutamine 87, 105 to 109, and aspartate 512; that span reads GEGKT. Residues 861 to 880 are disordered; it reads APGLGSEQLSEEGAEVAVAS. Cysteine 895, cysteine 897, cysteine 906, and histidine 907 together coordinate Zn(2+).

This sequence belongs to the SecA family. As to quaternary structure, monomer and homodimer. Part of the essential Sec protein translocation apparatus which comprises SecA, SecYEG and auxiliary proteins SecDF-YajC and YidC. Zn(2+) serves as cofactor.

The protein resides in the cell inner membrane. Its subcellular location is the cytoplasm. The catalysed reaction is ATP + H2O + cellular proteinSide 1 = ADP + phosphate + cellular proteinSide 2.. Functionally, part of the Sec protein translocase complex. Interacts with the SecYEG preprotein conducting channel. Has a central role in coupling the hydrolysis of ATP to the transfer of proteins into and across the cell membrane, serving both as a receptor for the preprotein-SecB complex and as an ATP-driven molecular motor driving the stepwise translocation of polypeptide chains across the membrane. The sequence is that of Protein translocase subunit SecA from Pseudomonas putida (strain ATCC 47054 / DSM 6125 / CFBP 8728 / NCIMB 11950 / KT2440).